The primary structure comprises 346 residues: DNA-directed RNA polymerase subunit alpha (346 aa).

The interval 1–233 (MLRDEVAVSA…DLFIPFLHAE (233 aa)) is alpha N-terminal domain (alpha-NTD). The alpha C-terminal domain (alpha-CTD) stretch occupies residues 268–346 (IELKCIFIDQ…NKFLIGNPSE (79 aa)).

The protein belongs to the RNA polymerase alpha chain family. As to quaternary structure, in plastids the minimal PEP RNA polymerase catalytic core is composed of four subunits: alpha, beta, beta', and beta''. When a (nuclear-encoded) sigma factor is associated with the core the holoenzyme is formed, which can initiate transcription.

It localises to the plastid. The protein localises to the chloroplast. It catalyses the reaction RNA(n) + a ribonucleoside 5'-triphosphate = RNA(n+1) + diphosphate. Functionally, DNA-dependent RNA polymerase catalyzes the transcription of DNA into RNA using the four ribonucleoside triphosphates as substrates. This Ranunculus macranthus (Large buttercup) protein is DNA-directed RNA polymerase subunit alpha.